An 872-amino-acid polypeptide reads, in one-letter code: Leucine--tRNA ligase (872 aa).

The 'HIGH' region signature appears at Pro42 to His52. A 'KMSKS' region motif is present at residues Lys631–Ser635. Lys634 is an ATP binding site.

The protein belongs to the class-I aminoacyl-tRNA synthetase family.

Its subcellular location is the cytoplasm. It carries out the reaction tRNA(Leu) + L-leucine + ATP = L-leucyl-tRNA(Leu) + AMP + diphosphate. The protein is Leucine--tRNA ligase of Blochmanniella pennsylvanica (strain BPEN).